Reading from the N-terminus, the 362-residue chain is Chemerin-like receptor 1 (362 aa).

At 1–37 (MEAEDYNASYEDYPDDVDPIVVLEELSPLEGRVVRIL) the chain is on the extracellular side. N-linked (GlcNAc...) asparagine glycosylation is present at Asn7. The chain crosses the membrane as a helical span at residues 38–58 (LVAVYSVICLLGILGNGLVIV). At 59 to 70 (MITCKMKRTVNT) the chain is on the cytoplasmic side. Residues 71–91 (VWFLNLAVADFLFNVFLPVHI) form a helical membrane-spanning segment. The Extracellular portion of the chain corresponds to 92 to 108 (AYAALDYHWVFGTAMCK). Residues Cys107 and Cys184 are joined by a disulfide bond. A helical membrane pass occupies residues 109-129 (ISNFLLIHNMFTSVFLLTVIS). Over 130–151 (FDRCVSVLLPVWSQNHRSVRLA) the chain is Cytoplasmic. A helical membrane pass occupies residues 152–172 (YTACLVIWVLAFFLSSPSLVF). The Extracellular segment spans residues 173–219 (RDTARLHGKISCFNNFSLSAAVSSPWPAHPQVDPVGSGRHKVVTITR). N-linked (GlcNAc...) asparagine glycosylation occurs at Asn187. Residues 220-240 (FLCGFLVPGLITTACYLTIVY) form a helical membrane-spanning segment. The Cytoplasmic segment spans residues 241–255 (KLQRSRLAKTKKPFK). Residues 256–276 (IILTIIVTFFLCWCPYHAFYL) form a helical membrane-spanning segment. Over 277 to 281 (LELRR) the chain is Extracellular. Residues 282-302 (GSVPPSVFSLGVPLATAIAIA) form a helical membrane-spanning segment. Residues 303–362 (NSCMNPILYVFMGQDFKKFRVALFSRLVNALSEDTGHSSYPSHRSFTKMSSMNERETGML) lie on the Cytoplasmic side of the membrane. Ser334 carries the phosphoserine modification. The tract at residues 336 to 362 (DTGHSSYPSHRSFTKMSSMNERETGML) is disordered. Thr337 carries the post-translational modification Phosphothreonine. Polar residues predominate over residues 339–354 (HSSYPSHRSFTKMSSM). 3 positions are modified to phosphoserine: Ser344, Ser347, and Ser353.

This sequence belongs to the chemokine-like receptor (CMKLR) family. Widely expressed in several tissues including adipose, muscle, liver and brain.

Its subcellular location is the cell membrane. Receptor for the chemoattractant adipokine chemerin/RARRES2 and for the omega-3 fatty acid derived molecule resolvin E1. Interaction with RARRES2 initiates activation of G proteins G(i)/G(o) and beta-arrestin pathways inducing cellular responses via second messenger pathways such as intracellular calcium mobilization, phosphorylation of MAP kinases MAPK1/MAPK3 (ERK1/2), TYRO3, MAPK14/P38MAPK and PI3K leading to multifunctional effects, like, reduction of immune responses, enhancing of adipogenesis and angionesis. Resolvin E1 down-regulates cytokine production in macrophages by reducing the activation of MAPK1/3 (ERK1/2) and NF-kappa-B. Positively regulates adipogenesis and adipocyte metabolism. In Bos taurus (Bovine), this protein is Chemerin-like receptor 1 (CMLKR1).